A 363-amino-acid chain; its full sequence is MIGSASDSSSKLGRLRFLSETAAIKVSPLILGEVSYDGARSDFLKSMNKNRAFELLDTFYEAGGNFIDAANNCQNEQSEEWIGEWIQSRRLRDQIVIATKFIKSDKKYKAGESNTANYCGNHKRSLHVSVRDSLRKLQTDWIDILYVHWWDYMSSIEEFMDSLHILVQQGKVLYLGVSDTPAWVVSAANYYATSYGKTPFSIYQGKWNVLNRDFERDIIPMARHFGMALAPWDVMGGGRFQSKKAMEERRKNGEGIRSFVGASEQTDAEIKISEALAKIAEEHGTESVTAIAIAYVRSKAKNFFPSVEGGKIEDLKENIKALSIDLTPDNIKYLESIVPFDIGFPNNFIVLNSLTQKYGTNNV.

Belongs to the aldo/keto reductase family. Aldo/keto reductase 2 subfamily.

The polypeptide is Putative aryl-alcohol dehydrogenase AAD3 (AAD3) (Saccharomyces cerevisiae (strain ATCC 204508 / S288c) (Baker's yeast)).